Here is a 209-residue protein sequence, read N- to C-terminus: Molybdenum cofactor guanylyltransferase (209 aa).

GTP-binding positions include 13-15 (LAG), Lys-26, Asn-54, Asp-72, and Asp-107. Asp-107 contacts Mg(2+).

It belongs to the MobA family. In terms of assembly, monomer. It depends on Mg(2+) as a cofactor.

It localises to the cytoplasm. It catalyses the reaction Mo-molybdopterin + GTP + H(+) = Mo-molybdopterin guanine dinucleotide + diphosphate. Functionally, transfers a GMP moiety from GTP to Mo-molybdopterin (Mo-MPT) cofactor (Moco or molybdenum cofactor) to form Mo-molybdopterin guanine dinucleotide (Mo-MGD) cofactor. This chain is Molybdenum cofactor guanylyltransferase, found in Nitrobacter hamburgensis (strain DSM 10229 / NCIMB 13809 / X14).